We begin with the raw amino-acid sequence, 290 residues long: MVMNMNHLHIFVKVGEKLNITEAAKELFISQPAVSKAIKNLESSLQLKLLIRDKHHGLMLTDIGKEILLLARQMKGIESKIYQVANRENKLLNGKVKIGSFPAVSTNIMPQAIAAFRSNYPLIRIELIEGTSDQIKGWVEDRTVDIGIAASPFEPFENQLLCNDYMVAVIPPQRDELKLEKHVDLETYQDDLIFCKGGHEIAMSNAFSQYNIELKENLTVQNAETLINMVKNNLGIGIISNFTLSSVPHQLIKKDIFPRVTRDIGVIAHSFEEITPAAHEFVKVLKAVVI.

Residues 1–61 (MVMNMNHLHI…RDKHHGLMLT (61 aa)) form the HTH lysR-type domain. Positions 20-39 (ITEAAKELFISQPAVSKAIK) form a DNA-binding region, H-T-H motif.

This sequence belongs to the LysR transcriptional regulatory family.

This is an uncharacterized protein from Bacillus subtilis (strain 168).